Consider the following 234-residue polypeptide: Synaptogyrin-1 (234 aa).

Met1 carries the post-translational modification N-acetylmethionine. Over 1–23 the chain is Cytoplasmic; the sequence is MEGGAYGAGKAGGAFDPYTLVRQ. Positions 20-173 constitute an MARVEL domain; that stretch reads LVRQPHTILR…QAVLAFQRYQ (154 aa). A helical transmembrane segment spans residues 24–44; the sequence is PHTILRVVSWVFSIVVFGSIV. The Lumenal portion of the chain corresponds to 45–71; sequence NEGYLNNPEEEEEFCIYNRNPNACSYG. The chain crosses the membrane as a helical span at residues 72-92; it reads VTVGVLAFLTCLVYLALDVYF. The Cytoplasmic portion of the chain corresponds to 93 to 104; that stretch reads PQISSVKDRKKA. Residues 105–125 form a helical membrane-spanning segment; sequence VLSDIGVSAFWAFFWFVGFCF. The Lumenal segment spans residues 126-148; it reads LANQWQVSKPKDNPLNEGTDAAR. Residues 149 to 169 traverse the membrane as a helical segment; sequence AAIAFSFFSIFTWAGQAVLAF. The Cytoplasmic segment spans residues 170–234; it reads QRYQIGADSA…EPQGYQSQGY (65 aa). The disordered stretch occupies residues 201-234; that stretch reads EPSAGSDPTGMGGTYQHPANAFDAEPQGYQSQGY.

The protein belongs to the synaptogyrin family. As to expression, nervous system (at protein level).

The protein resides in the cytoplasmic vesicle. It is found in the secretory vesicle. It localises to the synaptic vesicle membrane. The protein localises to the melanosome. Its function is as follows. May play a role in regulated exocytosis. Modulates the localization of synaptophysin/SYP into synaptic-like microvesicles and may therefore play a role in synaptic-like microvesicle formation and/or maturation. Involved in the regulation of short-term and long-term synaptic plasticity. The protein is Synaptogyrin-1 of Rattus norvegicus (Rat).